The primary structure comprises 114 residues: Superoxide dismutase [Cu-Zn] (114 aa).

Cu cation is bound by residues histidine 37, histidine 39, and histidine 54. Residues 49–73 form a disordered region; that stretch reads MSSGPHYNPRNKEHGAPTDENRHLG. The Zn(2+) site is built by histidine 54, histidine 62, histidine 71, and aspartate 74. Over residues 58–73 the composition is skewed to basic and acidic residues; sequence RNKEHGAPTDENRHLG. Residue histidine 111 coordinates Cu cation.

Belongs to the Cu-Zn superoxide dismutase family. Homodimer. Cu cation serves as cofactor. The cofactor is Zn(2+).

It is found in the cytoplasm. It catalyses the reaction 2 superoxide + 2 H(+) = H2O2 + O2. Its function is as follows. Destroys radicals which are normally produced within the cells and which are toxic to biological systems. In Drosophila madeirensis (Fruit fly), this protein is Superoxide dismutase [Cu-Zn].